The primary structure comprises 251 residues: D-aminoacyl-tRNA deacylase (251 aa).

It belongs to the DtdA deacylase family. Monomer. It depends on Zn(2+) as a cofactor.

It carries out the reaction a D-aminoacyl-tRNA + H2O = a tRNA + a D-alpha-amino acid + H(+). The enzyme catalyses glycyl-tRNA(Ala) + H2O = tRNA(Ala) + glycine + H(+). D-aminoacyl-tRNA deacylase with broad substrate specificity. By recycling D-aminoacyl-tRNA to D-amino acids and free tRNA molecules, this enzyme counteracts the toxicity associated with the formation of D-aminoacyl-tRNA entities in vivo. The sequence is that of D-aminoacyl-tRNA deacylase from Pyrobaculum calidifontis (strain DSM 21063 / JCM 11548 / VA1).